The chain runs to 242 residues: EF-hand domain-containing protein D2 (242 aa).

Residues 1 to 53 form a disordered region; it reads MATDELASKLSRRLQMEGEGGGEAPEQPGLNGAAAAAAAAGAPDETAEALGSA. Position 2 is an N-acetylalanine (Ala2). Ser11 carries the phosphoserine modification. The span at 32–42 shows a compositional bias: low complexity; sequence GAAAAAAAAGA. Ser76 and Ser78 each carry phosphoserine. The residue at position 85 (Tyr85) is a Phosphotyrosine. EF-hand domains follow at residues 94-129 and 130-165; these read KQIK…LGAP and QTHL…AAAG. Positions 107, 111, 118, 143, 145, 147, 149, and 154 each coordinate Ca(2+). Lys235 carries the N6-acetyllysine modification.

As to quaternary structure, interacts with CASP9; with inactive form.

The protein resides in the membrane raft. In terms of biological role, may regulate B-cell receptor (BCR)-induced immature and primary B-cell apoptosis. Plays a role as negative regulator of the canonical NF-kappa-B-activating branch. Controls spontaneous apoptosis through the regulation of BCL2L1 abundance. The polypeptide is EF-hand domain-containing protein D2 (EFHD2) (Bos taurus (Bovine)).